Reading from the N-terminus, the 544-residue chain is Membrane protein insertase YidC (544 aa).

Residues 6-26 (NLLLIALLFVTFMLWQAWETD) form a helical membrane-spanning segment. The tract at residues 112 to 132 (SGLTGKNGPDNPANGPRPLFT) is disordered. 4 consecutive transmembrane segments (helical) span residues 343–363 (KFLH…TFIV), 418–438 (LGGC…YYML), 456–476 (LSAQ…MFFI), and 497–517 (PVIF…YYIV).

Belongs to the OXA1/ALB3/YidC family. Type 1 subfamily. Interacts with the Sec translocase complex via SecD. Specifically interacts with transmembrane segments of nascent integral membrane proteins during membrane integration.

The protein resides in the cell inner membrane. Functionally, required for the insertion and/or proper folding and/or complex formation of integral membrane proteins into the membrane. Involved in integration of membrane proteins that insert both dependently and independently of the Sec translocase complex, as well as at least some lipoproteins. Aids folding of multispanning membrane proteins. This chain is Membrane protein insertase YidC, found in Pectobacterium carotovorum subsp. carotovorum (strain PC1).